Reading from the N-terminus, the 119-residue chain is Insulin growth factor-like family member 2 (119 aa).

The first 25 residues, 1–25 (MVPRIFAPAYVSVCLLLLCPREVIA), serve as a signal peptide directing secretion.

This sequence belongs to the IGFL family. In terms of tissue distribution, detected in cerebellum, heart, placenta, spleen, stomach, testis and thymus.

It is found in the secreted. Potential ligand of the IGFLR1 cell membrane receptor. This is Insulin growth factor-like family member 2 (IGFL2) from Homo sapiens (Human).